The following is a 951-amino-acid chain: Protein translocase subunit SecA 1 (951 aa).

Residues Gln-87, 105-109, and Asp-525 contribute to the ATP site; that span reads GEGKT. The interval 911–942 is disordered; it reads PVVSADRSSRDPGNPASWGKVGRNEDCPCGSG. Zn(2+) contacts are provided by Cys-937, Cys-939, Cys-948, and His-949.

The protein belongs to the SecA family. Monomer and homodimer. Part of the essential Sec protein translocation apparatus which comprises SecA, SecYEG and auxiliary proteins SecDF-YajC and YidC. Zn(2+) is required as a cofactor.

The protein resides in the cell inner membrane. The protein localises to the cytoplasm. It catalyses the reaction ATP + H2O + cellular proteinSide 1 = ADP + phosphate + cellular proteinSide 2.. Part of the Sec protein translocase complex. Interacts with the SecYEG preprotein conducting channel. Has a central role in coupling the hydrolysis of ATP to the transfer of proteins into and across the cell membrane, serving both as a receptor for the preprotein-SecB complex and as an ATP-driven molecular motor driving the stepwise translocation of polypeptide chains across the membrane. The protein is Protein translocase subunit SecA 1 of Nitrobacter hamburgensis (strain DSM 10229 / NCIMB 13809 / X14).